The chain runs to 215 residues: Recombination protein RecR (215 aa).

The C4-type zinc finger occupies 74-89 (CQRCGHLSADPICDIC). One can recognise a Toprim domain in the interval 97–191 (GVICVVADSR…RVTRIAYGLP (95 aa)).

It belongs to the RecR family.

May play a role in DNA repair. It seems to be involved in an RecBC-independent recombinational process of DNA repair. It may act with RecF and RecO. The polypeptide is Recombination protein RecR (Synechococcus sp. (strain RCC307)).